The following is a 142-amino-acid chain: Large ribosomal subunit protein uL22c (142 aa).

This sequence belongs to the universal ribosomal protein uL22 family. Part of the 50S ribosomal subunit.

The protein localises to the plastid. The protein resides in the chloroplast. This protein binds specifically to 23S rRNA. Functionally, the globular domain of the protein is located near the polypeptide exit tunnel on the outside of the subunit, while an extended beta-hairpin is found that lines the wall of the exit tunnel in the center of the 70S ribosome. This is Large ribosomal subunit protein uL22c (rpl22) from Picea abies (Norway spruce).